The primary structure comprises 125 residues: Small ribosomal subunit protein eS8 (125 aa).

Belongs to the eukaryotic ribosomal protein eS8 family. Part of the 30S ribosomal subunit.

This is Small ribosomal subunit protein eS8 from Methanosarcina barkeri (strain Fusaro / DSM 804).